The sequence spans 29 residues: Cycloviolacin-O15 (29 aa).

Residues 1 to 29 (GLVPCGETCFTGKCYTPGCSCSYPICKKN) constitute a cross-link (cyclopeptide (Gly-Asn)). Disulfide bonds link Cys5–Cys19, Cys9–Cys21, and Cys14–Cys26.

In terms of processing, this is a cyclic peptide.

Probably participates in a plant defense mechanism. Has hemolytic activity. The sequence is that of Cycloviolacin-O15 from Viola odorata (Sweet violet).